The primary structure comprises 833 residues: Leucine--tRNA ligase (833 aa).

Residues 41–52 carry the 'HIGH' region motif; it reads PYPSGAGLHVGH. Positions 610–614 match the 'KMSKS' region motif; that stretch reads KMSKS. Lys613 provides a ligand contact to ATP.

It belongs to the class-I aminoacyl-tRNA synthetase family.

The protein resides in the cytoplasm. It carries out the reaction tRNA(Leu) + L-leucine + ATP = L-leucyl-tRNA(Leu) + AMP + diphosphate. This is Leucine--tRNA ligase from Streptococcus pyogenes serotype M18 (strain MGAS8232).